Here is a 668-residue protein sequence, read N- to C-terminus: Threonine--tRNA ligase (668 aa).

One can recognise a TGS domain in the interval 1–64 (MSQSVSLTFP…TDGKIEIITR (64 aa)). The catalytic stretch occupies residues 245–553 (DHRKLGREMD…LIENFAGHMP (309 aa)). Cysteine 347, histidine 398, and histidine 530 together coordinate Zn(2+).

It belongs to the class-II aminoacyl-tRNA synthetase family. Homodimer. The cofactor is Zn(2+).

The protein localises to the cytoplasm. The enzyme catalyses tRNA(Thr) + L-threonine + ATP = L-threonyl-tRNA(Thr) + AMP + diphosphate + H(+). In terms of biological role, catalyzes the attachment of threonine to tRNA(Thr) in a two-step reaction: L-threonine is first activated by ATP to form Thr-AMP and then transferred to the acceptor end of tRNA(Thr). Also edits incorrectly charged L-seryl-tRNA(Thr). This Rhizobium etli (strain ATCC 51251 / DSM 11541 / JCM 21823 / NBRC 15573 / CFN 42) protein is Threonine--tRNA ligase.